A 131-amino-acid polypeptide reads, in one-letter code: Small ribosomal subunit protein uS11 (131 aa).

It belongs to the universal ribosomal protein uS11 family. As to quaternary structure, part of the 30S ribosomal subunit. Interacts with proteins S7 and S18. Binds to IF-3.

Its function is as follows. Located on the platform of the 30S subunit, it bridges several disparate RNA helices of the 16S rRNA. Forms part of the Shine-Dalgarno cleft in the 70S ribosome. The polypeptide is Small ribosomal subunit protein uS11 (Clostridium acetobutylicum (strain ATCC 824 / DSM 792 / JCM 1419 / IAM 19013 / LMG 5710 / NBRC 13948 / NRRL B-527 / VKM B-1787 / 2291 / W)).